Consider the following 520-residue polypeptide: GMP synthase [glutamine-hydrolyzing] (520 aa).

One can recognise a Glutamine amidotransferase type-1 domain in the interval 12-205 (KIIVLDYGSQ…AISICGARGD (194 aa)). The active-site Nucleophile is Cys-89. Active-site residues include His-179 and Glu-181. A GMPS ATP-PPase domain is found at 206 to 395 (WSMDNFIDME…LGMPEEIVWR (190 aa)). 233 to 239 (SGGVDSS) is a binding site for ATP.

As to quaternary structure, homodimer.

The catalysed reaction is XMP + L-glutamine + ATP + H2O = GMP + L-glutamate + AMP + diphosphate + 2 H(+). The protein operates within purine metabolism; GMP biosynthesis; GMP from XMP (L-Gln route): step 1/1. In terms of biological role, catalyzes the synthesis of GMP from XMP. The chain is GMP synthase [glutamine-hydrolyzing] from Streptococcus pyogenes serotype M5 (strain Manfredo).